Here is a 348-residue protein sequence, read N- to C-terminus: Dihydroorotase (348 aa).

H17 and H19 together coordinate Zn(2+). Residues 19–21 and N45 contribute to the substrate site; that span reads HLR. Zn(2+)-binding residues include K103, H140, and H178. The residue at position 103 (K103) is an N6-carboxylysine. H140 contacts substrate. L223 lines the substrate pocket. D251 is a binding site for Zn(2+). D251 is an active-site residue. 2 residues coordinate substrate: H255 and A267.

Belongs to the metallo-dependent hydrolases superfamily. DHOase family. Class II DHOase subfamily. In terms of assembly, homodimer. Requires Zn(2+) as cofactor.

The catalysed reaction is (S)-dihydroorotate + H2O = N-carbamoyl-L-aspartate + H(+). It participates in pyrimidine metabolism; UMP biosynthesis via de novo pathway; (S)-dihydroorotate from bicarbonate: step 3/3. Catalyzes the reversible cyclization of carbamoyl aspartate to dihydroorotate. The sequence is that of Dihydroorotase from Escherichia coli O6:K15:H31 (strain 536 / UPEC).